The sequence spans 622 residues: MQRSKSSLAALTLGAIGVVYGDIGTSVLYAVKEVFGSGHVAFTPQNVYGVLSILFWTLTTIVSLKYVVLVLRADNNGEGGLIAMLALASQAVKDKPRLRSALLGIGVFGTSLFYGDGVITPAISVLSAVEGLEVVSPHFGKAVIPLTLIVLFCLFAVQKRGTSGIGRYFGPVTLVWFTSIAALGVPHIVGHPEILGALSPHHALGFIWRSPGTSFIILGAVVLCVTGAEALYADLGHFGKKPIRLAWFSVAMPALTINYFGQGALLLAEPEAVKNPFYMMAPDWALIPLVIMATMATVIASQALITGAFSVTKQVIQLGYLPRLNILHTSVRDTGQIYIPFVNWALFLAIVLAVVMFRSSSNLAAAYGIAVTLDMLITTVLTFFVIRYGWRYPLALCIAATGFFFLVDLAFFGSNLLKLLQGGWFPLMIGSIVFMLMMTWKRGRELLNEKLRADAIDLRDFLTAVFVNPPTRVDGTAVFLTAEPGAVPNALLHNLKHNKVLHQQNLFVTVRNHEVPWIGLDKRLQVEALGGDCWQVMVHYGFKNDPDLPGALALMRGRGCELESMTTSYFLSRDVVTPTIGSGMAPWREKLFAQMHHNASGAAGFLNLPSNSVVELGSKIEI.

The next 12 helical transmembrane spans lie at 8-28 (LAAL…TSVL), 50-70 (VLSI…VVLV), 103-123 (LGIG…TPAI), 137-157 (PHFG…LFAV), 169-189 (FGPV…PHIV), 215-235 (FIIL…YADL), 247-267 (WFSV…ALLL), 285-305 (ALIP…QALI), 337-357 (IYIP…VVMF), 366-386 (AYGI…FFVI), 393-413 (PLAL…AFFG), and 419-439 (LLQG…LMMT).

The protein belongs to the HAK/KUP transporter (TC 2.A.72) family.

The protein resides in the cell inner membrane. It catalyses the reaction K(+)(in) + H(+)(in) = K(+)(out) + H(+)(out). Its function is as follows. Transport of potassium into the cell. Likely operates as a K(+):H(+) symporter. This chain is Probable potassium transport system protein Kup, found in Paracidovorax citrulli (strain AAC00-1) (Acidovorax citrulli).